The sequence spans 96 residues: Protein Vpr (96 aa).

The tract at residues 1-42 is homooligomerization; that stretch reads MEQAPEDQGPQREPHNEWTLELLEELKNEAVRHFPRIWLHGL. Ser-79, Ser-94, and Ser-96 each carry phosphoserine; by host.

This sequence belongs to the HIV-1 VPR protein family. As to quaternary structure, homooligomer, may form homodimer. Interacts with p6-gag region of the Pr55 Gag precursor protein through a (Leu-X-X)4 motif near the C-terminus of the P6gag protein. Interacts with host UNG. May interact with host RAD23A/HHR23A. Interacts with host VPRBP/DCAF1, leading to hijack the CUL4A-RBX1-DDB1-DCAF1/VPRBP complex, mediating ubiquitination of host proteins such as TERT and ZGPAT and arrest of the cell cycle in G2 phase. In terms of processing, phosphorylated on several residues by host. These phosphorylations regulate VPR activity for the nuclear import of the HIV-1 pre-integration complex.

The protein resides in the virion. The protein localises to the host nucleus. It is found in the host extracellular space. During virus entry, plays a role in the transport of the viral pre-integration (PIC) complex to the host nucleus. This function is crucial for viral infection of non-dividing macrophages. May act directly at the nuclear pore complex, by binding nucleoporins phenylalanine-glycine (FG)-repeat regions. In terms of biological role, during virus replication, may deplete host UNG protein, and incude G2-M cell cycle arrest. Acts by targeting specific host proteins for degradation by the 26S proteasome, through association with the cellular CUL4A-DDB1 E3 ligase complex by direct interaction with host VPRPB/DCAF-1. Cell cycle arrest reportedly occurs within hours of infection and is not blocked by antiviral agents, suggesting that it is initiated by the VPR carried into the virion. Additionally, VPR induces apoptosis in a cell cycle dependent manner suggesting that these two effects are mechanistically linked. Detected in the serum and cerebrospinal fluid of AIDS patient, VPR may also induce cell death to bystander cells. This chain is Protein Vpr, found in Human immunodeficiency virus type 1 group M subtype B (isolate BRU/LAI) (HIV-1).